We begin with the raw amino-acid sequence, 497 residues long: uncharacterized protein (497 aa).

The interval 58–79 (ISTRSFRNDGNDSDPQTLDPDA) is disordered. Helical transmembrane passes span 86 to 106 (IAFVLLNSILSDMSMSTALPI), 120 to 140 (FSGLVIGIPTMISLVCLYPML), 155 to 175 (FRPLIVSCISQIIGHLLYSLA), 180 to 200 (WLYLILIGRMCNGVGFTMFLY), 222 to 242 (LNILAQTVGFMAGSFLGGLLA), 258 to 278 (VGSWFMLFAWCIYGILLSIFF), 309 to 329 (FMLVFLSMVAFISYFNIAGYQ), 348 to 368 (GNFLSLSALVIAPLVFLSTFL), 378 to 398 (MLYGFILGILALVVHLVLDVL), 407 to 427 (FVLYSAMQFGFSIGSAPLISL), 438 to 458 (ILVGIIVQIGISAADTVGAIC), and 468 to 488 (VGFIALNLGIAVLVFIQLLFL).

The protein belongs to the major facilitator superfamily.

The protein resides in the membrane. This is an uncharacterized protein from Schizosaccharomyces pombe (strain 972 / ATCC 24843) (Fission yeast).